A 286-amino-acid polypeptide reads, in one-letter code: ATP synthase gamma chain (286 aa).

The protein belongs to the ATPase gamma chain family. In terms of assembly, F-type ATPases have 2 components, CF(1) - the catalytic core - and CF(0) - the membrane proton channel. CF(1) has five subunits: alpha(3), beta(3), gamma(1), delta(1), epsilon(1). CF(0) has three main subunits: a, b and c.

The protein localises to the cell inner membrane. Its function is as follows. Produces ATP from ADP in the presence of a proton gradient across the membrane. The gamma chain is believed to be important in regulating ATPase activity and the flow of protons through the CF(0) complex. In Flavobacterium psychrophilum (strain ATCC 49511 / DSM 21280 / CIP 103535 / JIP02/86), this protein is ATP synthase gamma chain.